The chain runs to 218 residues: Leucine-rich repeat protein 1 (218 aa).

The signal sequence occupies residues 1–27; that stretch reads MASRNYRWELFAASLTLTLALIHLVEA. LRR repeat units lie at residues 94-117, 119-140, 141-165, and 167-190; these read EHLQYLELYKNNIQGTIPSELGNL, NLISLDLYNNNLTGIVPTSLGK, LKSLVFLRLNDNRLTGPIPRALTAI, and SLKVVDVSSNDLCGTIPTNGPFAH.

As to quaternary structure, interacts with HIR1.

Its function is as follows. Involved in plant defense response. This is Leucine-rich repeat protein 1 from Arabidopsis thaliana (Mouse-ear cress).